The sequence spans 734 residues: 1,4-alpha-glucan branching enzyme GlgB (734 aa).

Asp413 (nucleophile) is an active-site residue. Catalysis depends on Glu466, which acts as the Proton donor.

Belongs to the glycosyl hydrolase 13 family. GlgB subfamily. In terms of assembly, monomer.

The catalysed reaction is Transfers a segment of a (1-&gt;4)-alpha-D-glucan chain to a primary hydroxy group in a similar glucan chain.. It participates in glycan biosynthesis; glycogen biosynthesis. In terms of biological role, catalyzes the formation of the alpha-1,6-glucosidic linkages in glycogen by scission of a 1,4-alpha-linked oligosaccharide from growing alpha-1,4-glucan chains and the subsequent attachment of the oligosaccharide to the alpha-1,6 position. In Nitrosomonas europaea (strain ATCC 19718 / CIP 103999 / KCTC 2705 / NBRC 14298), this protein is 1,4-alpha-glucan branching enzyme GlgB.